Here is a 527-residue protein sequence, read N- to C-terminus: MNSPCDRLQQFIQVLLEESWSFPSFANTLHWPENLLSYIDELVWQGSLQNFHQHEVRFDKPPLRLPLTGFSSLTENWSSRQAVSSRLVATAASPPAGCQAPIAFLGLKFSSLGPARKNPALCFLYDQSNSKCNTSWVKENVGCPWHWCNIHEALIRTEKGSDPMFYVNTSTGGRDGFNGFNLQISDPWDPRWASGVDGGLYEHKTFMYPVAKIRIARTLKTTVTGLSDLASSIQSAEKELTSQLQPAADQAKSSRFSWLTLISEGAQLLQSTGVQNLSHCFLCAALRRPPLVAVPLPTPFNYTINSSTPIPPVPKGQVPLFSDPIRHKFPFCYSTPNASWCNQTRMLTSTPAPPRGYFWCNSTLTKVLNSTGNHTLCLPISLIPGLTLYSQDELSHLLAWTEPRPQNKSKWAIFLPLVLGISLASSLVASGLGKGALTHSIQTSQDLSTHLQLAIEASAESLDSLQRQITTVAQVAAQNRQALDLLMAEKGRTCLFLQEECCYYLNESGVVENSLQTLKKKKSSKRS.

The segment at 1–411 (MNSPCDRLQQ…EPRPQNKSKW (411 aa)) is surface protein. The short motif at 280–283 (CFLC) is the CXXC element. The segment at 412–432 (AIFLPLVLGISLASSLVASGL) is fusion peptide. Positions 412 to 527 (AIFLPLVLGI…LKKKKSSKRS (116 aa)) are transmembrane protein. The CKS-17 signature appears at 477–493 (AQNRQALDLLMAEKGRT). A disulfide bridge links C494 with C501. Positions 494-502 (CLFLQEECC) match the CX6CC motif.

Belongs to the gamma type-C retroviral envelope protein family. HERV class-I F(c)2 env subfamily. The CXXC motif is highly conserved across a broad range of retroviral envelope proteins. It is thought to participate in the formation of a labile disulfide bond possibly with the CX6CC motif present in the transmembrane domain. Low expression in skin and testis.

The protein resides in the virion. Retroviral envelope proteins mediate receptor recognition and membrane fusion during early infection. Endogenous envelope proteins may have kept, lost or modified their original function during evolution. This endogenous envelope protein has lost its original fusogenic properties. The polypeptide is Endogenous retrovirus group FC1 member 1 Env polyprotein (ERVFC1-1) (Homo sapiens (Human)).